The primary structure comprises 506 residues: MKEYRVYLERARSRQQDFLYPLIFREYIYGLAYSHNFNRSIFVENGGYDNKYTLLNVKRLITRMYQQNHLIISANDSNKNPFLGYNKNFYSQIISEGFAIVVEIPFFLQLSSSLEEAEIIKSYKNVRSIHSVFPFLEDKFTYLNYVSDIRIPYPIHLEILVQILRYWVKDVPFFHLLRWFLYHFXNWNCFIPTKKSISTFSKSNPRLFLFLYNFYVCEYESIFLFLRNKSYHLRLKSFSVFFERNFFYAKREHLVEVFSKDFSYTLPFFKDPNIHYVRYQGKCILASKNVPFLMNKWKYYFIHLWQCFFDVWSQPRTININQLSEHSFQLLGYFSNVRLNRSVVRSQMLQNTFLIEIVSKKLDIIVPIIPLIRSLAKAKFCNVLGHPISKPVWADSSDFDIIXRFLRICRNLSHYYNGSSKKKSLYRIKYILRLSCIKTLACKHKSTVRAFLKRSGSEELLEEFFTEEEEILSLIFPRDSFTLHRFHRNRIWYLDILFSNDLVNDE.

It belongs to the intron maturase 2 family. MatK subfamily.

It is found in the plastid. The protein resides in the chloroplast. Its function is as follows. Usually encoded in the trnK tRNA gene intron. Probably assists in splicing its own and other chloroplast group II introns. The polypeptide is Maturase K (Trifolium willdenovii (Tomcat clover)).